The chain runs to 147 residues: UPF0306 protein YPTB0506 (147 aa).

Belongs to the UPF0306 family.

The chain is UPF0306 protein YPTB0506 from Yersinia pseudotuberculosis serotype I (strain IP32953).